The following is a 661-amino-acid chain: Methyl-accepting chemotaxis protein McpA (661 aa).

The Cytoplasmic segment spans residues 1–16; that stretch reads MKKILQLIKQRSITRK. The helical transmembrane segment at 17–37 threads the bilayer; it reads LLVSFLSILIIPVVILAIFAY. The Extracellular segment spans residues 38 to 281; sequence QSASSSLDRQ…IHEAAQPVLH (244 aa). Residues 152-228 enclose the Cache domain; sequence ITDPYKTAST…QSGTELKGDW (77 aa). A helical membrane pass occupies residues 282-302; sequence LALIVLAAAIIIGIIVMTLII. The 53-residue stretch at 303–355 folds into the HAMP domain; sequence RSITTPLKQLVGSSKRISEGDLTETIDIRSKDELGELGKSFNNMASSLRSLIH. At 303 to 661 the chain is on the cytoplasmic side; sequence RSITTPLKQL…RDMTKRFKIE (359 aa). E370 bears the Glutamate methyl ester (Glu) mark. One can recognise a Methyl-accepting transducer domain in the interval 374–610; that stretch reads SAAQTSKATE…EVSGASEHIA (237 aa). Deamidated glutamine is present on residues Q593 and Q594. A Glutamate methyl ester (Gln) modification is found at Q594. Residues E629 and E636 each carry the glutamate methyl ester (Glu) modification.

Belongs to the methyl-accepting chemotaxis (MCP) protein family. In terms of assembly, interacts with FloT. Deamidated by CheD on Gln-593 and Gln-594, producing glutamate residues. The glutamate residues are then methylated. Other additional sites are deamidated and methylated as well.

It localises to the cell membrane. The protein resides in the membrane raft. In terms of biological role, chemotactic-signal transducers respond to changes in the concentration of attractants and repellents in the environment, transduce a signal from the outside to the inside of the cell, and facilitate sensory adaptation through the variation of the level of methylation. All amino acids serve as attractants in B.subtilis, they appear to cause an increase in the turnover methyl groups, leading to methylation of an unidentified acceptor, while repellents have been shown to cause a decrease in methyl group turnover. The methyl groups are added by a methyltransferase and removed by a methylesterase. McpA is required for taxis towards glucose and alpha-methylglucoside. The sequence is that of Methyl-accepting chemotaxis protein McpA (mcpA) from Bacillus subtilis (strain 168).